A 285-amino-acid polypeptide reads, in one-letter code: Acetylglutamate kinase (285 aa).

Substrate is bound by residues 55-56, Arg-77, and Asn-171; that span reads GG.

The protein belongs to the acetylglutamate kinase family. ArgB subfamily.

It localises to the cytoplasm. The enzyme catalyses N-acetyl-L-glutamate + ATP = N-acetyl-L-glutamyl 5-phosphate + ADP. Its pathway is amino-acid biosynthesis; L-arginine biosynthesis; N(2)-acetyl-L-ornithine from L-glutamate: step 2/4. Catalyzes the ATP-dependent phosphorylation of N-acetyl-L-glutamate. The polypeptide is Acetylglutamate kinase (Chlorobaculum tepidum (strain ATCC 49652 / DSM 12025 / NBRC 103806 / TLS) (Chlorobium tepidum)).